We begin with the raw amino-acid sequence, 587 residues long: Kelch-like protein 3 (587 aa).

Residues 1–24 form a disordered region; that stretch reads MEGESVKPSPQPTAQAEDEEKNRR. A BTB domain is found at 50-117; it reads CDVMIVAEDV…IYTAEIEVTE (68 aa). Positions 152-254 constitute a BACK domain; that stretch reads CLGIRAFADV…PRDYLVQTVE (103 aa). Thr295 is subject to Phosphothreonine. 6 Kelch repeats span residues 302–347, 348–394, 396–441, 442–490, 491–537, and 539–585; these read VMIV…FMAG, HVYA…VLND, LYAV…VVEG, KLYA…VLSG, QLYA…AVNG, and LYVV…VIHK. A Phosphothreonine modification is found at Thr375. 2 positions are modified to phosphoserine: Ser376 and Ser433.

It belongs to the KLHL3 family. Homodimer. Component of the BCR(KLHL3) E3 ubiquitin ligase complex, at least composed of CUL3 and KLHL3 and RBX1. Interacts with CLDN8. In terms of processing, phosphorylation at Ser-433 by PKA or PKC decreases the interaction with WNK1 and WNK4, leading to inhibit their degradation by the BCR(KLHL3) complex. Phosphorylated at Ser-433 by PKC in response to angiotensin II signaling, decreasing ability to promote degradation of WNK1 and WNK4, leading to activation of Na-Cl cotransporter SLC12A3/NCC. Phosphorylation at Ser-433 is increased by insulin. Dephosphorylated at Ser-433 by calcineurin PPP3CA, promoting degradation of WNK1 and WNK4. In terms of tissue distribution, present at high level in brain and kidney (at protein level). Weakly expressed in other tissues. In kidney, predominantly localizes to the distal convoluted tubule (DCT) and collecting duct, with apical localization in the DCT (at protein level).

Its subcellular location is the cytoplasm. The protein localises to the cytosol. It is found in the cytoskeleton. Its pathway is protein modification; protein ubiquitination. Functionally, substrate-specific adapter of a BCR (BTB-CUL3-RBX1) E3 ubiquitin ligase complex that acts as a regulator of ion transport in the distal nephron. The BCR(KLHL3) complex acts by mediating ubiquitination and degradation of WNK1 and WNK4, two activators of Na-Cl cotransporter SLC12A3/NCC in distal convoluted tubule cells of kidney, thereby regulating NaCl reabsorption. The BCR(KLHL3) complex also mediates ubiquitination of CLDN8, a tight-junction protein required for paracellular chloride transport in the kidney, leading to its degradation. The sequence is that of Kelch-like protein 3 from Mus musculus (Mouse).